We begin with the raw amino-acid sequence, 75 residues long: UPF0154 protein MYPE400 (75 aa).

The helical transmembrane segment at 5–27 (IGLCLGLGIPISLIIGAVIGYYF) threads the bilayer.

It belongs to the UPF0154 family.

The protein resides in the membrane. The chain is UPF0154 protein MYPE400 from Malacoplasma penetrans (strain HF-2) (Mycoplasma penetrans).